The chain runs to 673 residues: DNA ligase (673 aa).

NAD(+)-binding positions include 33–37, 82–83, and E113; these read DYEYD and SL. Residue K115 is the N6-AMP-lysine intermediate of the active site. Positions 136, 170, 285, and 309 each coordinate NAD(+). Residues C403, C406, C421, and C426 each coordinate Zn(2+). The 90-residue stretch at 583–672 folds into the BRCT domain; it reads AKSDILKGYT…SREEAEKILM (90 aa).

Belongs to the NAD-dependent DNA ligase family. LigA subfamily. Mg(2+) is required as a cofactor. Requires Mn(2+) as cofactor.

It catalyses the reaction NAD(+) + (deoxyribonucleotide)n-3'-hydroxyl + 5'-phospho-(deoxyribonucleotide)m = (deoxyribonucleotide)n+m + AMP + beta-nicotinamide D-nucleotide.. Functionally, DNA ligase that catalyzes the formation of phosphodiester linkages between 5'-phosphoryl and 3'-hydroxyl groups in double-stranded DNA using NAD as a coenzyme and as the energy source for the reaction. It is essential for DNA replication and repair of damaged DNA. This Caldicellulosiruptor bescii (strain ATCC BAA-1888 / DSM 6725 / KCTC 15123 / Z-1320) (Anaerocellum thermophilum) protein is DNA ligase.